Consider the following 198-residue polypeptide: Holliday junction branch migration complex subunit RuvA (198 aa).

The tract at residues M1 to L64 is domain I. The tract at residues D65 to A141 is domain II. A flexible linker region spans residues A141–V145. The domain III stretch occupies residues A146 to R198.

It belongs to the RuvA family. As to quaternary structure, homotetramer. Forms an RuvA(8)-RuvB(12)-Holliday junction (HJ) complex. HJ DNA is sandwiched between 2 RuvA tetramers; dsDNA enters through RuvA and exits via RuvB. An RuvB hexamer assembles on each DNA strand where it exits the tetramer. Each RuvB hexamer is contacted by two RuvA subunits (via domain III) on 2 adjacent RuvB subunits; this complex drives branch migration. In the full resolvosome a probable DNA-RuvA(4)-RuvB(12)-RuvC(2) complex forms which resolves the HJ.

The protein resides in the cytoplasm. Functionally, the RuvA-RuvB-RuvC complex processes Holliday junction (HJ) DNA during genetic recombination and DNA repair, while the RuvA-RuvB complex plays an important role in the rescue of blocked DNA replication forks via replication fork reversal (RFR). RuvA specifically binds to HJ cruciform DNA, conferring on it an open structure. The RuvB hexamer acts as an ATP-dependent pump, pulling dsDNA into and through the RuvAB complex. HJ branch migration allows RuvC to scan DNA until it finds its consensus sequence, where it cleaves and resolves the cruciform DNA. This Acidobacterium capsulatum (strain ATCC 51196 / DSM 11244 / BCRC 80197 / JCM 7670 / NBRC 15755 / NCIMB 13165 / 161) protein is Holliday junction branch migration complex subunit RuvA.